Reading from the N-terminus, the 504-residue chain is Heat shock 70 kDa protein 14 (504 aa).

Belongs to the heat shock protein 70 family. Component of ribosome-associated complex (RAC).

The protein localises to the cytoplasm. Its subcellular location is the cytosol. Its function is as follows. Component of the ribosome-associated complex (RAC), a complex involved in folding or maintaining nascent polypeptides in a folding-competent state. The sequence is that of Heat shock 70 kDa protein 14 (hspa14) from Danio rerio (Zebrafish).